The following is a 366-amino-acid chain: 3-dehydroquinate synthase (366 aa).

NAD(+)-binding positions include 75-80, 109-113, 133-134, Lys146, Lys155, and 173-176; these read DGEEYK, GVVGD, TT, and TLDT. Positions 188, 251, and 268 each coordinate Zn(2+).

The protein belongs to the sugar phosphate cyclases superfamily. Dehydroquinate synthase family. Co(2+) serves as cofactor. The cofactor is Zn(2+). It depends on NAD(+) as a cofactor.

The protein resides in the cytoplasm. It catalyses the reaction 7-phospho-2-dehydro-3-deoxy-D-arabino-heptonate = 3-dehydroquinate + phosphate. It functions in the pathway metabolic intermediate biosynthesis; chorismate biosynthesis; chorismate from D-erythrose 4-phosphate and phosphoenolpyruvate: step 2/7. Its function is as follows. Catalyzes the conversion of 3-deoxy-D-arabino-heptulosonate 7-phosphate (DAHP) to dehydroquinate (DHQ). This Nitrosospira multiformis (strain ATCC 25196 / NCIMB 11849 / C 71) protein is 3-dehydroquinate synthase.